Here is a 613-residue protein sequence, read N- to C-terminus: UBX domain-containing protein 3 (613 aa).

Disordered regions lie at residues 67 to 223 and 453 to 472; these read PAAA…PINP and MNEQSERREREEREAIRNQQ. Positions 68-82 are enriched in low complexity; it reads AAASGRNAGASSSSR. A compositionally biased stretch (basic residues) spans 137–149; the sequence is THHRGAAIPRQKR. Residues 158-169 show a composition bias toward low complexity; the sequence is SSSGSSSASFSS. Residues 452-517 are a coiled coil; sequence RMNEQSERRE…EEEECVRRQT (66 aa). One can recognise a UBX domain in the interval 531–610; it reads PLAEIINVKF…KWPAREQIFV (80 aa). An Interaction with cdc-48 motif is present at residues 582-584; it reads FPK.

In terms of assembly, forms a complex composed of ubxn-3, cdc-48.1, ufd-1 and npl-4.1. Forms a complex composed of ubxn-3, cdc-48.1 and/or cdc-48.2 and substrate cdt-1. Interacts (via FPK motif) with cdc-48.1 (via N-terminus) and cdc-48.2 (via N-terminus). Interacts (via N-terminus) with cdt-1 and ubiquitinated protein substrates; the interaction is cdc-48-independent. May interact with npl-4.1. Expressed in the germline (at protein level). Expressed in spermatocytes but not in mature sperm (at protein level). Expressed in the spermatheca and nerve cells.

Its subcellular location is the nucleus. The protein resides in the cytoplasm. It is found in the perinuclear region. It localises to the chromosome. Functionally, ubiquitin-binding protein which acts as an adapter for ATPase cdc-48.1 and/or cdc-48.2, conferring substrate specificity. Together with ubxn-1 and ubxn-2, plays a role in hermaphrodite spermatogenesis probably by promoting the degradation of sex determination terminal factor tra-1. During mitosis, ensures the degradation of DNA licensing factor cdt-1 and the disassembly of the DNA replication CMG helicase complex by promoting the dissociation from chromatin of several of its components including cdc-45 and sld-5. The sequence is that of UBX domain-containing protein 3 from Caenorhabditis elegans.